The sequence spans 165 residues: Nucleotide-binding protein P9211_04811 (165 aa).

The protein belongs to the YajQ family.

Functionally, nucleotide-binding protein. This Prochlorococcus marinus (strain MIT 9211) protein is Nucleotide-binding protein P9211_04811.